The following is a 299-amino-acid chain: NmrA-like family domain-containing protein 1 (299 aa).

NADP(+)-binding positions include 11-16, 37-41, 58-59, Q62, 79-81, K92, K133, and 155-158; these read GGTGAQ, RNPRK, DQ, TNY, and YFEN. Residues 153–189 are interaction with ASS1; that stretch reads PCYFENLLSHFLPQKAPDGKSYLLSLPTGDVPMDGMS.

This sequence belongs to the NmrA-type oxidoreductase family. In terms of assembly, homodimer. Interacts with ASS1. Interaction is enhanced by low NADPH/NADP(+) ratios, which results in inhibition of ASS1 activity.

The protein resides in the cytoplasm. The protein localises to the perinuclear region. Its subcellular location is the nucleus. Functionally, redox sensor protein. Undergoes restructuring and subcellular redistribution in response to changes in intracellular NADPH/NADP(+) levels. At low NADPH concentrations the protein is found mainly as a monomer, and binds argininosuccinate synthase (ASS1), the enzyme involved in nitric oxide synthesis. Association with ASS1 impairs its activity and reduces the production of nitric oxide, which subsecuently prevents apoptosis. Under normal NADPH concentrations, the protein is found as a dimer and hides the binding site for ASS1. The homodimer binds one molecule of NADPH. Has higher affinity for NADPH than for NADP(+). Binding to NADPH is necessary to form a stable dimer. This is NmrA-like family domain-containing protein 1 (NMRAL1) from Homo sapiens (Human).